The sequence spans 480 residues: Sialyltransferase-like protein 5 (480 aa).

The Cytoplasmic portion of the chain corresponds to 1-17; that stretch reads MARAPPPLSSLPPPPRR. A signal-anchor for type II membrane protein membrane pass occupies residues 18 to 38; sequence PTVVLLLGLALAFCLAVLSIQ. Topologically, residues 39–480 are lumenal; it reads SSFFTAPRLA…VCVRHERSSS (442 aa). 4 N-linked (GlcNAc...) asparagine glycosylation sites follow: N98, N130, N165, and N321.

Belongs to the glycosyltransferase 29 family.

The protein resides in the golgi apparatus membrane. May possess sialyltransferase-like activity in vitro. In Oryza sativa subsp. japonica (Rice), this protein is Sialyltransferase-like protein 5.